Reading from the N-terminus, the 205-residue chain is Holliday junction branch migration complex subunit RuvA (205 aa).

The tract at residues 1–64 is domain I; sequence MIGRIRGLLV…EDAQLLYGFI (64 aa). The tract at residues 65-143 is domain II; that stretch reads SKQERALFRL…SLMEASVGSE (79 aa). The segment at 144–156 is flexible linker; it reads REFMLQSNYTAPV. The domain III stretch occupies residues 157-205; it reads VANTAEEDAIAALLSLGYKPAQASKAVSAVYVDGIDSESLIKSALKSML.

It belongs to the RuvA family. In terms of assembly, homotetramer. Forms an RuvA(8)-RuvB(12)-Holliday junction (HJ) complex. HJ DNA is sandwiched between 2 RuvA tetramers; dsDNA enters through RuvA and exits via RuvB. An RuvB hexamer assembles on each DNA strand where it exits the tetramer. Each RuvB hexamer is contacted by two RuvA subunits (via domain III) on 2 adjacent RuvB subunits; this complex drives branch migration. In the full resolvosome a probable DNA-RuvA(4)-RuvB(12)-RuvC(2) complex forms which resolves the HJ.

Its subcellular location is the cytoplasm. In terms of biological role, the RuvA-RuvB-RuvC complex processes Holliday junction (HJ) DNA during genetic recombination and DNA repair, while the RuvA-RuvB complex plays an important role in the rescue of blocked DNA replication forks via replication fork reversal (RFR). RuvA specifically binds to HJ cruciform DNA, conferring on it an open structure. The RuvB hexamer acts as an ATP-dependent pump, pulling dsDNA into and through the RuvAB complex. HJ branch migration allows RuvC to scan DNA until it finds its consensus sequence, where it cleaves and resolves the cruciform DNA. The sequence is that of Holliday junction branch migration complex subunit RuvA from Shewanella piezotolerans (strain WP3 / JCM 13877).